The sequence spans 241 residues: Chloride intracellular channel protein 1 (241 aa).

An N-acetylalanine modification is found at alanine 2. The tract at residues 2–90 (AEEQPQVELF…EEFLEAVLCP (89 aa)) is required for insertion into the membrane. Position 13 is an N6-acetyllysine (lysine 13). Positions 24–27 (CPFS) match the G-site motif. Cysteine 24 and cysteine 59 form a disulfide bridge. Residues 26–46 (FSQRLFMVLWLKGVTFNVTTV) form a helical membrane-spanning segment. Positions 93 to 233 (YPKLAALNPE…PDDEEIELAY (141 aa)) constitute a GST C-terminal domain. Lysine 119 bears the N6-acetyllysine mark. Serine 121 bears the Phosphoserine mark. Lysine 131 is modified (N6-acetyllysine). A phosphoserine mark is found at serine 156 and serine 211. Tyrosine 233 carries the phosphotyrosine modification.

It belongs to the chloride channel CLIC family. As to quaternary structure, monomer. Homodimer (in vitro). Interacts with TRAPPC2. Dimerization requires a conformation change that leads to the exposure of a large hydrophobic surface. In vivo, this may lead to membrane insertion. In terms of tissue distribution, expressed in neonatal and adult cardiomyocytes (at protein level).

Its subcellular location is the nucleus. The protein localises to the nucleus membrane. It localises to the cytoplasm. The protein resides in the cell membrane. It is found in the endoplasmic reticulum. It carries out the reaction L-dehydroascorbate + 2 glutathione = glutathione disulfide + L-ascorbate. It catalyses the reaction chloride(in) = chloride(out). The enzyme catalyses iodide(out) = iodide(in). The catalysed reaction is thiocyanate(in) = thiocyanate(out). It carries out the reaction nitrate(in) = nitrate(out). It catalyses the reaction bromide(in) = bromide(out). The enzyme catalyses fluoride(in) = fluoride(out). In the soluble state, catalyzes glutaredoxin-like thiol disulfide exchange reactions with reduced glutathione as electron donor. Reduces selenite and dehydroascorbate and may act as an antioxidant during oxidative stress response. Can insert into membranes and form voltage-dependent multi-ion conductive channels. Membrane insertion seems to be redox-regulated and may occur only under oxidizing conditions. Involved in regulation of the cell cycle. This chain is Chloride intracellular channel protein 1, found in Rattus norvegicus (Rat).